A 70-amino-acid polypeptide reads, in one-letter code: Large ribosomal subunit protein eL38 (70 aa).

Belongs to the eukaryotic ribosomal protein eL38 family.

The protein is Large ribosomal subunit protein eL38 (RpL38) of Bombyx mori (Silk moth).